The chain runs to 123 residues: 13 kDa major membrane protein (123 aa).

It localises to the cell membrane. The polypeptide is 13 kDa major membrane protein (Francisella tularensis subsp. holarctica (strain LVS)).